A 447-amino-acid polypeptide reads, in one-letter code: Phosphoglucosamine mutase (447 aa).

The Phosphoserine intermediate role is filled by serine 104. 4 residues coordinate Mg(2+): serine 104, aspartate 243, aspartate 245, and aspartate 247. Residue serine 104 is modified to Phosphoserine.

Belongs to the phosphohexose mutase family. Mg(2+) serves as cofactor. In terms of processing, activated by phosphorylation.

It catalyses the reaction alpha-D-glucosamine 1-phosphate = D-glucosamine 6-phosphate. In terms of biological role, catalyzes the conversion of glucosamine-6-phosphate to glucosamine-1-phosphate. The chain is Phosphoglucosamine mutase from Corynebacterium jeikeium (strain K411).